We begin with the raw amino-acid sequence, 170 residues long: Crossover junction endodeoxyribonuclease RuvC (170 aa).

Residues aspartate 8, glutamate 67, and aspartate 139 contribute to the active site. 3 residues coordinate Mg(2+): aspartate 8, glutamate 67, and aspartate 139.

Belongs to the RuvC family. In terms of assembly, homodimer which binds Holliday junction (HJ) DNA. The HJ becomes 2-fold symmetrical on binding to RuvC with unstacked arms; it has a different conformation from HJ DNA in complex with RuvA. In the full resolvosome a probable DNA-RuvA(4)-RuvB(12)-RuvC(2) complex forms which resolves the HJ. Mg(2+) is required as a cofactor.

It is found in the cytoplasm. The catalysed reaction is Endonucleolytic cleavage at a junction such as a reciprocal single-stranded crossover between two homologous DNA duplexes (Holliday junction).. Functionally, the RuvA-RuvB-RuvC complex processes Holliday junction (HJ) DNA during genetic recombination and DNA repair. Endonuclease that resolves HJ intermediates. Cleaves cruciform DNA by making single-stranded nicks across the HJ at symmetrical positions within the homologous arms, yielding a 5'-phosphate and a 3'-hydroxyl group; requires a central core of homology in the junction. The consensus cleavage sequence is 5'-(A/T)TT(C/G)-3'. Cleavage occurs on the 3'-side of the TT dinucleotide at the point of strand exchange. HJ branch migration catalyzed by RuvA-RuvB allows RuvC to scan DNA until it finds its consensus sequence, where it cleaves and resolves the cruciform DNA. In Pectobacterium atrosepticum (strain SCRI 1043 / ATCC BAA-672) (Erwinia carotovora subsp. atroseptica), this protein is Crossover junction endodeoxyribonuclease RuvC.